The chain runs to 140 residues: MAIERTFSMIKPDATRRNLTGAIIAKLEEAGLRVVASKRVWMSRREAEGFYAVHKDRPFFGELVEFMSSGPTVVQVLEGENAIAKNREVMGATNPANADEGTIRKTFALSIGENSVHGSDAPETAAEEIAYWFSGTEIVG.

Lys-11, Phe-59, Arg-87, Thr-93, Arg-104, and Asn-114 together coordinate ATP. Catalysis depends on His-117, which acts as the Pros-phosphohistidine intermediate.

It belongs to the NDK family. As to quaternary structure, homotetramer. Mg(2+) serves as cofactor.

The protein resides in the cytoplasm. It carries out the reaction a 2'-deoxyribonucleoside 5'-diphosphate + ATP = a 2'-deoxyribonucleoside 5'-triphosphate + ADP. The catalysed reaction is a ribonucleoside 5'-diphosphate + ATP = a ribonucleoside 5'-triphosphate + ADP. Major role in the synthesis of nucleoside triphosphates other than ATP. The ATP gamma phosphate is transferred to the NDP beta phosphate via a ping-pong mechanism, using a phosphorylated active-site intermediate. This Brucella canis (strain ATCC 23365 / NCTC 10854 / RM-666) protein is Nucleoside diphosphate kinase.